The sequence spans 221 residues: UPF0319 protein CGSHiEE_03630 (221 aa).

Positions 1–21 (MKLRAVVLGLATLCTSTATFA) are cleaved as a signal peptide.

This sequence belongs to the UPF0319 family.

The protein is UPF0319 protein CGSHiEE_03630 of Haemophilus influenzae (strain PittEE).